A 351-amino-acid chain; its full sequence is MPVLHNRVSNQELRARMLAESEPRTTVSFYRYFTLSDPQGFRDDLYRTLTALQVFGRVYIAAEGINAQISVLQSRFDAMREALYAAHPQLDGLRLNVALDDDGKSFWVLRMKVRPRIVADGIDDPTFNPANVGHYLKAEEVNALADDPQALFVDMRNHYEYEVGHFDQAIEIPSDTFREQLPMVVEMLQHDKDKKIVMYCTGGIRCEKASAWMRHNGFKNVYHVEGGIIEYARRAREQGLPLKFTGKNFVFDERLGERITPDIIAHCHQCGAPCDSHTNCRNQGCHLLFIQCPVCAEHYVGCCSVTCQEELSLPLSEQRSHRAGRENGMKIFNKSRERLQLSLTGEDSAQK.

A Rhodanese domain is found at Asp146–Leu240. The Cysteine persulfide intermediate role is filled by Cys200.

It belongs to the TrhO family.

The catalysed reaction is uridine(34) in tRNA + AH2 + O2 = 5-hydroxyuridine(34) in tRNA + A + H2O. In terms of biological role, catalyzes oxygen-dependent 5-hydroxyuridine (ho5U) modification at position 34 in tRNAs. This is tRNA uridine(34) hydroxylase from Sodalis glossinidius (strain morsitans).